The chain runs to 617 residues: Na(+)/H(+) antiporter NhaA 1 (617 aa).

A disordered region spans residues 1-26 (MTVTEPATQRGFPLLPSRLSRGSKAT). The tract at residues 1 to 433 (MTVTEPATQR…GWAIFRITDW (433 aa)) is na(+)/H(+) antiporter NhaA. Helical transmembrane passes span 33-53 (AAAL…SPWA), 75-95 (MTVK…IVGL), 113-133 (AVPV…FLAF), 141-161 (HAWG…LAII), 171-191 (LFLL…IAVL), 198-218 (VAPL…RYLP), 234-254 (IALY…ALLI), 304-324 (VSPV…AGVL), 341-361 (GIVA…TWLI), 378-398 (IAGG…IVDI), and 411-431 (IGVL…FRIT). The region spanning 434-617 (LSPPEPVGLK…LIRALEAGRG (184 aa)) is the Thioredoxin domain.

The protein in the N-terminal section; belongs to the NhaA Na(+)/H(+) (TC 2.A.33) antiporter family.

Its subcellular location is the cell membrane. The enzyme catalyses Na(+)(in) + 2 H(+)(out) = Na(+)(out) + 2 H(+)(in). Its function is as follows. Na(+)/H(+) antiporter that extrudes sodium in exchange for external protons. The sequence is that of Na(+)/H(+) antiporter NhaA 1 from Mycolicibacterium gilvum (strain PYR-GCK) (Mycobacterium gilvum (strain PYR-GCK)).